The primary structure comprises 433 residues: GTPase Obg (433 aa).

Residues 1 to 159 (MKFVDSADLI…FEIRAELKVL (159 aa)) enclose the Obg domain. Positions 160-332 (ADVGFVGLPN…LLFMIYEELK (173 aa)) constitute an OBG-type G domain. Residues 166–173 (GLPNAGKS), 191–195 (FTTIN), 213–216 (DLPG), 284–287 (NKMD), and 313–315 (SGL) each bind GTP. 2 residues coordinate Mg(2+): S173 and T193. The 79-residue stretch at 355–433 (KFEEQKEDIQ…VFDYELEWTD (79 aa)) folds into the OCT domain.

Belongs to the TRAFAC class OBG-HflX-like GTPase superfamily. OBG GTPase family. In terms of assembly, monomer. Mg(2+) serves as cofactor.

The protein localises to the cytoplasm. An essential GTPase which binds GTP, GDP and possibly (p)ppGpp with moderate affinity, with high nucleotide exchange rates and a fairly low GTP hydrolysis rate. Plays a role in control of the cell cycle, stress response, ribosome biogenesis and in those bacteria that undergo differentiation, in morphogenesis control. In Mycoplasma capricolum subsp. capricolum (strain California kid / ATCC 27343 / NCTC 10154), this protein is GTPase Obg.